The chain runs to 128 residues: SH2 domain-containing protein 1A (128 aa).

In terms of domain architecture, SH2 spans 6 to 102 (VYHGKISRET…GIVIPLQYPV (97 aa)). The interval 67-92 (ETAPGVHKRFFRKIKNLISAFQKPDQ) is interaction with FYN SH3 domain. Lys89 carries the post-translational modification N6-acetyllysine. The segment at 104-128 (KKPSARSTQGATGRRDDPDVFLKTP) is disordered. The span at 116-128 (GRRDDPDVFLKTP) shows a compositional bias: basic and acidic residues.

Interacts with CD84, CD244, LY9, SLAMF1 and FYN. Interacts with NTRK1, NTRK2 and NTRK3.

It is found in the cytoplasm. Its function is as follows. Cytoplasmic adapter regulating receptors of the signaling lymphocytic activation molecule (SLAM) family such as SLAMF1, CD244, LY9, CD84, SLAMF6 and SLAMF7. In SLAM signaling seems to cooperate with SH2D1B/EAT-2. Initially it has been proposed that association with SLAMF1 prevents SLAMF1 binding to inhibitory effectors including INPP5D/SHIP1 and PTPN11/SHP-2. However, by simultaneous interactions, recruits FYN which subsequently phosphorylates and activates SLAMF1. Positively regulates CD244/2B4- and CD84-mediated natural killer (NK) cell functions. Can also promote CD48-, SLAMF6 -, LY9-, and SLAMF7-mediated NK cell activation. In the context of NK cell-mediated cytotoxicity enhances conjugate formation with target cells. May also regulate the activity of the neurotrophin receptors NTRK1, NTRK2 and NTRK3. In Bos taurus (Bovine), this protein is SH2 domain-containing protein 1A (SH2D1A).